The sequence spans 273 residues: Dermonecrotic toxin LafSicTox-betaIE1 (273 aa).

H5 is a catalytic residue. Residues E25 and D27 each contribute to the Mg(2+) site. Catalysis depends on H41, which acts as the Nucleophile. Cystine bridges form between C45–C51 and C47–C189. D85 provides a ligand contact to Mg(2+). An N-linked (GlcNAc...) asparagine glycan is attached at N250.

Belongs to the arthropod phospholipase D family. Class II subfamily. It depends on Mg(2+) as a cofactor. In terms of tissue distribution, expressed by the venom gland.

It localises to the secreted. The enzyme catalyses an N-(acyl)-sphingosylphosphocholine = an N-(acyl)-sphingosyl-1,3-cyclic phosphate + choline. It carries out the reaction an N-(acyl)-sphingosylphosphoethanolamine = an N-(acyl)-sphingosyl-1,3-cyclic phosphate + ethanolamine. The catalysed reaction is a 1-acyl-sn-glycero-3-phosphocholine = a 1-acyl-sn-glycero-2,3-cyclic phosphate + choline. It catalyses the reaction a 1-acyl-sn-glycero-3-phosphoethanolamine = a 1-acyl-sn-glycero-2,3-cyclic phosphate + ethanolamine. In terms of biological role, dermonecrotic toxins cleave the phosphodiester linkage between the phosphate and headgroup of certain phospholipids (sphingolipid and lysolipid substrates), forming an alcohol (often choline) and a cyclic phosphate. This toxin acts on sphingomyelin (SM). It may also act on ceramide phosphoethanolamine (CPE), lysophosphatidylcholine (LPC) and lysophosphatidylethanolamine (LPE), but not on lysophosphatidylserine (LPS), and lysophosphatidylglycerol (LPG). It acts by transphosphatidylation, releasing exclusively cyclic phosphate products as second products. Induces dermonecrosis, hemolysis, increased vascular permeability, edema, inflammatory response, and platelet aggregation. In Loxosceles aff. spinulosa (strain GJB-2008) (Recluse spider), this protein is Dermonecrotic toxin LafSicTox-betaIE1.